An 830-amino-acid polypeptide reads, in one-letter code: MSLVSAVTGDESRDTNGAEQSSVYQSAGKPLSKEALYRAKLKYGVFQSPAQSLKAGVVNGKDASDTAANLATSNKTTIEAYKRLLNPNASKAANAVITPKKTDQSRPASAVVSSAASSAAIAAPKAARSRTSSTASTTVTYVNSSSSSPLHSKTPKMDITKVLAGAERNAAESVHQRTNPEKVSYVRGITDRSVGKAADASFSLTSDIVSNLPTKKEYIQSAEKESHAAEWAQKAVAALKDFNPDDVTDKNWREREEERKRLIKNLTSETVLTKAKLNAQQRLDTIDRETSQRAIFRNAEYNRAAASVAQENLRKTRSSASATANKVNLGGGLWLAPDDIDNIAKGLIAPVLDEVDQRTGAQRAMDIDIQKRSVDYQQQYEEWVNIQTEKQNNDSLLQAKAFENHQKETADIEATLAKKFQNLCTQKDSEVAKLKEALEAKKAELAKLKEDNEEELKREDEMITTECADLQKSNENELEQAKKDQEELLVPFKNDLAAAEDHHTELQDQKGKIEENIQELRDSIEKHKSHVEELNAQIETQQQQLETETEALNLQSESHQQLKDGIETNYVIMAEKAKEEAKVSSEEARVKQLEVDAIINERQTELSNTEIEVKREKLKLIDAMKEVAEVKNEDKIDEEKAKAFLGTTSGEFLASQKKVEPATKLQSDPKLSEPSSKSTKIEGVTGNVKADVPASPPAHKKHSIGGLTSPLKSKKKSDKDQKGSSIKKFFGLKPSDQNKNTKTTQPTPLKSSPKPSNKPVTATVTTEKKENVEPKSTATETKPSLEPSFSGFSQGSVHNKVEQSDASEVEGGKEEPTSKDNRKSLFKEVF.

Disordered stretches follow at residues 1–29, 128–156, and 650–830; these read MSLV…SAGK, RSRT…KTPK, and GEFL…KEVF. 2 stretches are compositionally biased toward low complexity: residues 128–148 and 741–761; these read RSRT…SSSS and TKTT…KPVT. The segment covering 810–830 has biased composition (basic and acidic residues); the sequence is EGGKEEPTSKDNRKSLFKEVF.

This sequence belongs to the EIS1 family.

The protein localises to the cytoplasmic granule. The protein resides in the cell membrane. In terms of biological role, required for normal formation of eisosomes, large cytoplasmic protein assemblies that localize to specialized domains on plasma membrane and mark the site of endocytosis. The sequence is that of Eisosome protein 1 (EIS1) from Kluyveromyces lactis (strain ATCC 8585 / CBS 2359 / DSM 70799 / NBRC 1267 / NRRL Y-1140 / WM37) (Yeast).